The primary structure comprises 116 residues: Large ribosomal subunit protein uL24 (116 aa).

The disordered stretch occupies residues 1-27 (MAGRKSSTPTRHKMHVKTGDTVQVISG).

This sequence belongs to the universal ribosomal protein uL24 family. In terms of assembly, part of the 50S ribosomal subunit.

One of two assembly initiator proteins, it binds directly to the 5'-end of the 23S rRNA, where it nucleates assembly of the 50S subunit. Its function is as follows. One of the proteins that surrounds the polypeptide exit tunnel on the outside of the subunit. In Picosynechococcus sp. (strain ATCC 27264 / PCC 7002 / PR-6) (Agmenellum quadruplicatum), this protein is Large ribosomal subunit protein uL24.